The primary structure comprises 685 residues: Methionine--tRNA ligase (685 aa).

The short motif at 15–25 (PYANGPIHLGH) is the 'HIGH' region element. Zn(2+) contacts are provided by C146, C149, C159, and C162. Residues 331-335 (KMSKS) carry the 'KMSKS' region motif. K334 contacts ATP. Residues 583–685 (DFAKMDLRVA…AGVKAGSRVK (103 aa)) form the tRNA-binding domain.

Belongs to the class-I aminoacyl-tRNA synthetase family. MetG type 1 subfamily. In terms of assembly, homodimer. Requires Zn(2+) as cofactor.

It is found in the cytoplasm. It carries out the reaction tRNA(Met) + L-methionine + ATP = L-methionyl-tRNA(Met) + AMP + diphosphate. Is required not only for elongation of protein synthesis but also for the initiation of all mRNA translation through initiator tRNA(fMet) aminoacylation. In Actinobacillus succinogenes (strain ATCC 55618 / DSM 22257 / CCUG 43843 / 130Z), this protein is Methionine--tRNA ligase.